The sequence spans 180 residues: ATP-dependent protease subunit HslV (180 aa).

Residue T5 is part of the active site. 3 residues coordinate Na(+): G161, C164, and T167.

Belongs to the peptidase T1B family. HslV subfamily. A double ring-shaped homohexamer of HslV is capped on each side by a ring-shaped HslU homohexamer. The assembly of the HslU/HslV complex is dependent on binding of ATP.

It is found in the cytoplasm. The enzyme catalyses ATP-dependent cleavage of peptide bonds with broad specificity.. With respect to regulation, allosterically activated by HslU binding. Protease subunit of a proteasome-like degradation complex believed to be a general protein degrading machinery. This Campylobacter curvus (strain 525.92) protein is ATP-dependent protease subunit HslV.